A 323-amino-acid chain; its full sequence is Sphingolipid delta(4)-desaturase DES1 (323 aa).

Residue Gly-2 is the site of N-myristoyl glycine attachment. 2 helical membrane-spanning segments follow: residues Ser-41–Val-61 and Trp-68–Ile-88. The Histidine box-1 signature appears at His-89–His-93. A helical membrane pass occupies residues Ala-102–Val-122. Residues His-128–His-132 carry the Histidine box-2 motif. Transmembrane regions (helical) follow at residues Phe-152 to Phe-172, Tyr-184 to Leu-204, and Leu-209 to Phe-229. Residues His-259–His-263 carry the Histidine box-3 motif. At Ser-307 the chain carries Phosphoserine.

This sequence belongs to the fatty acid desaturase type 1 family. DEGS subfamily. In terms of assembly, interacts with RLBP1; the interaction increases synthesis of chromophore-precursors by DEGS1. Post-translationally, myristoylation can target the enzyme to the mitochondria leading to an increase in ceramide levels.

The protein resides in the mitochondrion membrane. It is found in the endoplasmic reticulum membrane. The catalysed reaction is an N-acylsphinganine + 2 Fe(II)-[cytochrome b5] + O2 + 2 H(+) = an N-acylsphing-4-enine + 2 Fe(III)-[cytochrome b5] + 2 H2O. The enzyme catalyses all-trans-retinol = 11-cis-retinol. It carries out the reaction all-trans-retinol = 9-cis-retinol. It catalyses the reaction all-trans-retinol = 13-cis-retinol. The catalysed reaction is 11-cis-retinol = 13-cis-retinol. The enzyme catalyses 11-cis-retinol = 9-cis-retinol. Functionally, has sphingolipid-delta-4-desaturase activity. Converts D-erythro-sphinganine to D-erythro-sphingosine (E-sphing-4-enine). Catalyzes the equilibrium isomerization of retinols. The chain is Sphingolipid delta(4)-desaturase DES1 (DEGS1) from Bos taurus (Bovine).